Reading from the N-terminus, the 112-residue chain is T cell receptor alpha variable 34 (112 aa).

The signal sequence occupies residues M1–S21. Residues Q22–D112 enclose the Ig-like domain. 2 N-linked (GlcNAc...) asparagine glycosylation sites follow: N38 and N42. A disulfide bridge links C43 with C109.

In terms of assembly, alpha-beta TR is a heterodimer composed of an alpha and beta chain; disulfide-linked. The alpha-beta TR is associated with the transmembrane signaling CD3 coreceptor proteins to form the TR-CD3 (TcR or TCR). The assembly of alpha-beta TR heterodimers with CD3 occurs in the endoplasmic reticulum where a single alpha-beta TR heterodimer associates with one CD3D-CD3E heterodimer, one CD3G-CD3E heterodimer and one CD247 homodimer forming a stable octameric structure. CD3D-CD3E and CD3G-CD3E heterodimers preferentially associate with TR alpha and TR beta chains, respectively. The association of the CD247 homodimer is the last step of TcR assembly in the endoplasmic reticulum and is required for transport to the cell surface.

It is found in the cell membrane. Functionally, v region of the variable domain of T cell receptor (TR) alpha chain that participates in the antigen recognition. Alpha-beta T cell receptors are antigen specific receptors which are essential to the immune response and are present on the cell surface of T lymphocytes. Recognize peptide-major histocompatibility (MH) (pMH) complexes that are displayed by antigen presenting cells (APC), a prerequisite for efficient T cell adaptive immunity against pathogens. Binding of alpha-beta TR to pMH complex initiates TR-CD3 clustering on the cell surface and intracellular activation of LCK that phosphorylates the ITAM motifs of CD3G, CD3D, CD3E and CD247 enabling the recruitment of ZAP70. In turn ZAP70 phosphorylates LAT, which recruits numerous signaling molecules to form the LAT signalosome. The LAT signalosome propagates signal branching to three major signaling pathways, the calcium, the mitogen-activated protein kinase (MAPK) kinase and the nuclear factor NF-kappa-B (NF-kB) pathways, leading to the mobilization of transcription factors that are critical for gene expression and essential for T cell growth and differentiation. The T cell repertoire is generated in the thymus, by V-(D)-J rearrangement. This repertoire is then shaped by intrathymic selection events to generate a peripheral T cell pool of self-MH restricted, non-autoaggressive T cells. Post-thymic interaction of alpha-beta TR with the pMH complexes shapes TR structural and functional avidity. In Homo sapiens (Human), this protein is T cell receptor alpha variable 34.